A 373-amino-acid polypeptide reads, in one-letter code: Glutamate 5-kinase (373 aa).

ATP is bound at residue Lys15. Residues Ser55, Asp142, and Asn154 each coordinate substrate. ATP-binding positions include Thr174–Asp175 and Thr216–Lys222. The PUA domain occupies Ser281–Lys359.

It belongs to the glutamate 5-kinase family.

Its subcellular location is the cytoplasm. The catalysed reaction is L-glutamate + ATP = L-glutamyl 5-phosphate + ADP. It participates in amino-acid biosynthesis; L-proline biosynthesis; L-glutamate 5-semialdehyde from L-glutamate: step 1/2. In terms of biological role, catalyzes the transfer of a phosphate group to glutamate to form L-glutamate 5-phosphate. The chain is Glutamate 5-kinase from Geobacter sulfurreducens (strain ATCC 51573 / DSM 12127 / PCA).